The following is a 482-amino-acid chain: Cardiolipin synthase (482 aa).

Helical transmembrane passes span 4–24 and 34–54; these read LAYLLVVLLILNVFFAAVTVF and WAWLLVLTFVPIFGFIIYLIF. 2 consecutive PLD phosphodiesterase domains span residues 217 to 244 and 395 to 422; these read LNYRNHRKLAIIDGDISYIGGFNIGDEY and DNGFIHAKTLVVDGEIASVGTANMDFRS. Catalysis depends on residues His-222, Lys-224, Asp-229, His-400, Lys-402, and Asp-407.

It belongs to the phospholipase D family. Cardiolipin synthase subfamily.

The protein localises to the cell membrane. It catalyses the reaction 2 a 1,2-diacyl-sn-glycero-3-phospho-(1'-sn-glycerol) = a cardiolipin + glycerol. Functionally, catalyzes the reversible phosphatidyl group transfer from one phosphatidylglycerol molecule to another to form cardiolipin (CL) (diphosphatidylglycerol) and glycerol. This is Cardiolipin synthase (cls) from Listeria welshimeri serovar 6b (strain ATCC 35897 / DSM 20650 / CCUG 15529 / CIP 8149 / NCTC 11857 / SLCC 5334 / V8).